The following is a 314-amino-acid chain: Protein YIF1B (314 aa).

At methionine 1 the chain carries N-acetylmethionine. The span at 1–12 (MHPAGLAAAAAG) shows a compositional bias: low complexity. The interval 1-55 (MHPAGLAAAAAGTPRLRKWPSKRRIPVSQPGMADPHQLFDDTSSAQSRGYGAQRA) is disordered. Residues 1–156 (MHPAGLAAAA…APRFDVNAPD (156 aa)) lie on the Cytoplasmic side of the membrane. Threonine 13 bears the Phosphothreonine mark. Positions 15-25 (RLRKWPSKRRI) are enriched in basic residues. Serine 65 is modified (phosphoserine). The chain crosses the membrane as a helical span at residues 157 to 177 (LYIPAMAFITYVLVAGLALGT). The Extracellular portion of the chain corresponds to 178 to 192 (QDRFSPDLLGLQASS). A helical membrane pass occupies residues 193 to 213 (ALAWLTLEVLAILLSLYLVTV). Residues 214–219 (NTDLTT) are Cytoplasmic-facing. The helical transmembrane segment at 220–240 (IDLVAFLGYKYVGMIGGVLMG) threads the bilayer. Position 241 (leucine 241) is a topological domain, extracellular. A helical transmembrane segment spans residues 242-262 (LFGKIGYYLVLGWCCVAIFVF). The Cytoplasmic portion of the chain corresponds to 263 to 292 (MIRTLRLKILADAAAEGVPVRGARNQLRMY). The chain crosses the membrane as a helical span at residues 293–313 (LTMAVAAAQPMLMYWLTFHLV). Arginine 314 is a topological domain (extracellular).

Belongs to the YIF1 family. Interacts with HTR1A (via C-terminus). Interacts with ABCB9 (via TMD0); this interaction allows (but is not essential) the ER-to-Golgi trafficking and strongly depends on a salt bridge within TMD0.

The protein resides in the endoplasmic reticulum membrane. Its subcellular location is the golgi apparatus membrane. The protein localises to the endoplasmic reticulum-Golgi intermediate compartment membrane. In terms of biological role, functions in endoplasmic reticulum to Golgi vesicle-mediated transport and regulates the proper organization of the endoplasmic reticulum and the Golgi. Plays a key role in targeting to neuronal dendrites receptors such as HTR1A. Plays also a role in primary cilium and sperm flagellum assembly probably through protein transport to these compartments. The protein is Protein YIF1B of Homo sapiens (Human).